We begin with the raw amino-acid sequence, 28 residues long: Nicotinic acetylcholine receptor-binding protein Mnn-3C (28 aa).

The cysteines at positions 3 and 24 are disulfide-linked.

This sequence belongs to the three-finger toxin family. Short-chain subfamily. As to expression, expressed by the venom gland.

It is found in the secreted. Its function is as follows. Binds and may inhibit nicotinic acetylcholine receptors (nAChR). The sequence is that of Nicotinic acetylcholine receptor-binding protein Mnn-3C from Micrurus nigrocinctus (Central American coral snake).